A 237-amino-acid polypeptide reads, in one-letter code: 4'-phosphopantetheinyl transferase gsp (237 aa).

Mg(2+)-binding residues include Asp-106, Glu-108, and Glu-150.

This sequence belongs to the P-Pant transferase superfamily. Gsp/Sfp/HetI/AcpT family. It depends on Mg(2+) as a cofactor.

The enzyme catalyses apo-[peptidyl-carrier protein] + CoA = holo-[peptidyl-carrier protein] + adenosine 3',5'-bisphosphate + H(+). In terms of biological role, activates the five peptidyl carrier protein (PCP) domains of gramicidin synthase GrsAB, by transferring the 4'-phosphopantetheinyl moiety of coenzyme A (CoA) to a serine residue. Required for gramicidin S production. The sequence is that of 4'-phosphopantetheinyl transferase gsp (gsp) from Aneurinibacillus migulanus (Bacillus migulanus).